The chain runs to 216 residues: MOB kinase activator-like 1 homolog B (216 aa).

Zn(2+) is bound by residues Cys-79, Cys-84, His-161, and His-166.

This sequence belongs to the MOB1/phocein family.

The protein is MOB kinase activator-like 1 homolog B (mobB) of Dictyostelium discoideum (Social amoeba).